The primary structure comprises 104 residues: Colipase-like protein 2 (104 aa).

Positions 1–19 (MAFTQALVTVLAFLVGTLP) are cleaved as a signal peptide. 5 cysteine pairs are disulfide-bonded: C38–C49, C44–C60, C48–C82, C70–C90, and C84–C101.

This sequence belongs to the colipase family.

The protein resides in the secreted. In Rattus norvegicus (Rat), this protein is Colipase-like protein 2 (Clpsl2).